The primary structure comprises 243 residues: Outer membrane protein A (243 aa).

5 beta stranded membrane passes run 1-8 (LAAKLSYP), 13-21 (LDIYTRLGG), 48-57 (PLAAVGVEYA), 62-69 (WATRLDYQ), and 88-96 (MLSLGVSYR). Repeat copies occupy residues 104-105 (AP), 106-107 (AP), 108-109 (AP), 110-111 (AP), and 112-113 (AP). The tract at residues 104–113 (APAPAPAPAP) is 5 X 2 AA tandem repeats of A-P. The 129-residue stretch at 115–243 (VETKLFTLKS…RRVEIEVKGI (129 aa)) folds into the OmpA-like domain. A disulfide bond links C215 and C229.

Belongs to the outer membrane OOP (TC 1.B.6) superfamily. OmpA family. As to quaternary structure, monomer and homodimer.

It is found in the cell outer membrane. Its function is as follows. With TolR probably plays a role in maintaining the position of the peptidoglycan cell wall in the periplasm. Acts as a porin with low permeability that allows slow penetration of small solutes; an internal gate slows down solute passage. The protein is Outer membrane protein A of Serratia odorifera.